A 320-amino-acid chain; its full sequence is Acetyl-coenzyme A carboxylase carboxyl transferase subunit alpha (320 aa).

The 262-residue stretch at 33 to 294 folds into the CoA carboxyltransferase C-terminal domain; the sequence is AFDTEIQALR…GDAVEDELKA (262 aa).

The protein belongs to the AccA family. In terms of assembly, acetyl-CoA carboxylase is a heterohexamer composed of biotin carboxyl carrier protein (AccB), biotin carboxylase (AccC) and two subunits each of ACCase subunit alpha (AccA) and ACCase subunit beta (AccD).

It is found in the cytoplasm. The enzyme catalyses N(6)-carboxybiotinyl-L-lysyl-[protein] + acetyl-CoA = N(6)-biotinyl-L-lysyl-[protein] + malonyl-CoA. It functions in the pathway lipid metabolism; malonyl-CoA biosynthesis; malonyl-CoA from acetyl-CoA: step 1/1. Its function is as follows. Component of the acetyl coenzyme A carboxylase (ACC) complex. First, biotin carboxylase catalyzes the carboxylation of biotin on its carrier protein (BCCP) and then the CO(2) group is transferred by the carboxyltransferase to acetyl-CoA to form malonyl-CoA. This is Acetyl-coenzyme A carboxylase carboxyl transferase subunit alpha from Caulobacter vibrioides (strain ATCC 19089 / CIP 103742 / CB 15) (Caulobacter crescentus).